The following is a 31-amino-acid chain: Nemertide alpha-2 (31 aa).

Intrachain disulfides connect C2-C16, C9-C20, and C15-C26. 4-hydroxyproline is present on residues P28 and P29.

It belongs to the nemertide family. As to expression, confined to the epidermis and to the mucus layer.

It localises to the secreted. In terms of biological role, toxin with similar potency against both insect and mammalian sodium channels (Nav). Delays the inactivation of most Nav channels tested (B.germanica (BgNav1); EC(50)=87.2 nM, human Nav1.1/SCN1A; EC(50)=125.8 nM, rat Nav1.2/SCN2A; EC(50)=97.9 nM, rat Nav1.3/SCN3A; EC(50)=127.7 nM, rat Nav1.4/SCN4A; EC(50)=1150.3 nM, human Nav1.5/SCN5A; EC(50)=149.2 nM, mouse Nav1.6/SCN8A; EC(50)=1361.8 nM, human Nav1.9/SCN9A; EC(50)=1296.7 nM). Inactivation is completely prevented by a concentration of 1 uM, resulting in sustained, non-inactivating current. In addition, the toxin significantly enhances the recovery from inactivation, and the open state is not required for the toxin to interact with the channel. In vivo, injection into brine shrimp (Artemia salina) stops movement or causes death after 24 hours (EC(50)=2.9 uM). In Lineus longissimus (Bootlace worm), this protein is Nemertide alpha-2.